Consider the following 354-residue polypeptide: Sorbitol dehydrogenase (354 aa).

Residue cysteine 43 participates in Zn(2+) binding. Residue tyrosine 49 participates in substrate binding. The Zn(2+) site is built by histidine 67 and glutamate 68. Glutamate 153 lines the substrate pocket. The NAD(+) site is built by isoleucine 181, aspartate 201, and arginine 206. Serine 208 and serine 222 each carry phosphoserine. NAD(+) is bound by residues 270–272 (VGL) and 294–296 (VFR). Residues arginine 296 and tyrosine 297 each contribute to the substrate site.

This sequence belongs to the zinc-containing alcohol dehydrogenase family. In terms of assembly, homotetramer. Requires Zn(2+) as cofactor. As to expression, expressed in liver.

Its subcellular location is the mitochondrion membrane. It is found in the cell projection. The protein resides in the cilium. It localises to the flagellum. It carries out the reaction xylitol + NAD(+) = D-xylulose + NADH + H(+). The catalysed reaction is L-iditol + NAD(+) = keto-L-sorbose + NADH + H(+). The enzyme catalyses keto-D-fructose + NADH + H(+) = D-sorbitol + NAD(+). Polyol dehydrogenase that catalyzes the reversible NAD(+)-dependent oxidation of various sugar alcohols. Is mostly active with xylitol, L-iditol and D-sorbitol (D-glucitol) as substrates, leading to the C2-oxidized products D-xylulose, L-sorbose and D-fructose, respectively. Is a key enzyme in the polyol pathway that interconverts glucose and fructose via sorbitol, which constitutes an important alternate route for glucose metabolism. May play a role in sperm motility by using sorbitol as an alternative energy source for sperm motility. The protein is Sorbitol dehydrogenase (SORD) of Ovis aries (Sheep).